Here is a 425-residue protein sequence, read N- to C-terminus: Serine--tRNA ligase (425 aa).

L-serine is bound at residue 233–235 (TAE). Residue 264 to 266 (RRE) participates in ATP binding. Position 287 (Glu-287) interacts with L-serine. 351 to 354 (EVSS) serves as a coordination point for ATP. Ser-386 is a binding site for L-serine.

The protein belongs to the class-II aminoacyl-tRNA synthetase family. Type-1 seryl-tRNA synthetase subfamily. In terms of assembly, homodimer. The tRNA molecule binds across the dimer.

It is found in the cytoplasm. It carries out the reaction tRNA(Ser) + L-serine + ATP = L-seryl-tRNA(Ser) + AMP + diphosphate + H(+). The catalysed reaction is tRNA(Sec) + L-serine + ATP = L-seryl-tRNA(Sec) + AMP + diphosphate + H(+). Its pathway is aminoacyl-tRNA biosynthesis; selenocysteinyl-tRNA(Sec) biosynthesis; L-seryl-tRNA(Sec) from L-serine and tRNA(Sec): step 1/1. Its function is as follows. Catalyzes the attachment of serine to tRNA(Ser). Is also able to aminoacylate tRNA(Sec) with serine, to form the misacylated tRNA L-seryl-tRNA(Sec), which will be further converted into selenocysteinyl-tRNA(Sec). This Thermosipho melanesiensis (strain DSM 12029 / CIP 104789 / BI429) protein is Serine--tRNA ligase.